Consider the following 535-residue polypeptide: GMP synthase [glutamine-hydrolyzing] (535 aa).

The Glutamine amidotransferase type-1 domain maps to 4 to 210 (KILILDFGSQ…VHEICKCKPD (207 aa)). Residue C85 is the Nucleophile of the active site. Catalysis depends on residues H184 and E186. The GMPS ATP-PPase domain maps to 211 to 403 (WVMGDYIAEA…LGLPREMVYR (193 aa)). Residue 238-244 (SGGVDSS) coordinates ATP.

Homodimer.

It carries out the reaction XMP + L-glutamine + ATP + H2O = GMP + L-glutamate + AMP + diphosphate + 2 H(+). Its pathway is purine metabolism; GMP biosynthesis; GMP from XMP (L-Gln route): step 1/1. In terms of biological role, catalyzes the synthesis of GMP from XMP. The protein is GMP synthase [glutamine-hydrolyzing] of Polynucleobacter necessarius subsp. necessarius (strain STIR1).